The sequence spans 451 residues: D-inositol 3-phosphate glycosyltransferase (451 aa).

His-37 is a 1D-myo-inositol 3-phosphate binding site. UDP-N-acetyl-alpha-D-glucosamine-binding positions include 43–44 (QP) and Gly-51. Residues 48–53 (DAGGMN), Lys-106, Tyr-138, Thr-162, and Arg-182 each bind 1D-myo-inositol 3-phosphate. 3 residues coordinate UDP-N-acetyl-alpha-D-glucosamine: Arg-259, Lys-264, and Arg-323. Residues Tyr-332, Arg-333, and Ala-335 each contribute to the Mg(2+) site. Residues Glu-345 and Glu-353 each contribute to the UDP-N-acetyl-alpha-D-glucosamine site. Thr-359 serves as a coordination point for Mg(2+).

The protein belongs to the glycosyltransferase group 1 family. MshA subfamily. In terms of assembly, homodimer.

The enzyme catalyses 1D-myo-inositol 3-phosphate + UDP-N-acetyl-alpha-D-glucosamine = 1D-myo-inositol 2-acetamido-2-deoxy-alpha-D-glucopyranoside 3-phosphate + UDP + H(+). Functionally, catalyzes the transfer of a N-acetyl-glucosamine moiety to 1D-myo-inositol 3-phosphate to produce 1D-myo-inositol 2-acetamido-2-deoxy-glucopyranoside 3-phosphate in the mycothiol biosynthesis pathway. The polypeptide is D-inositol 3-phosphate glycosyltransferase (Corynebacterium kroppenstedtii (strain DSM 44385 / JCM 11950 / CIP 105744 / CCUG 35717)).